A 330-amino-acid polypeptide reads, in one-letter code: 4-hydroxythreonine-4-phosphate dehydrogenase (330 aa).

Substrate-binding residues include His-134 and Thr-135. A divalent metal cation-binding residues include His-164, His-209, and His-264. The substrate site is built by Lys-272, Asn-281, and Arg-290.

Belongs to the PdxA family. Homodimer. It depends on Zn(2+) as a cofactor. Mg(2+) is required as a cofactor. Requires Co(2+) as cofactor.

The protein localises to the cytoplasm. The catalysed reaction is 4-(phosphooxy)-L-threonine + NAD(+) = 3-amino-2-oxopropyl phosphate + CO2 + NADH. The protein operates within cofactor biosynthesis; pyridoxine 5'-phosphate biosynthesis; pyridoxine 5'-phosphate from D-erythrose 4-phosphate: step 4/5. Functionally, catalyzes the NAD(P)-dependent oxidation of 4-(phosphooxy)-L-threonine (HTP) into 2-amino-3-oxo-4-(phosphooxy)butyric acid which spontaneously decarboxylates to form 3-amino-2-oxopropyl phosphate (AHAP). This Pseudoalteromonas translucida (strain TAC 125) protein is 4-hydroxythreonine-4-phosphate dehydrogenase.